An 83-amino-acid polypeptide reads, in one-letter code: Mu-theraphotoxin-Hhn2b 1 (83 aa).

Positions 1–21 (MKASMFLALAGLVLLFVVCYA) are cleaved as a signal peptide. Positions 22–48 (SESEEKEFPRELISKIFAVDDFKGEER) are excised as a propeptide. Disulfide bonds link cysteine 50-cysteine 65, cysteine 57-cysteine 70, and cysteine 64-cysteine 77. Leucine 81 carries the post-translational modification Leucine amide.

Belongs to the neurotoxin 10 (Hwtx-1) family. 14 (Hntx-1) subfamily. In terms of assembly, monomer. As to expression, expressed by the venom gland.

It is found in the secreted. Weakly blocks the rat SCN2A/SCN1B (Nav1.2/beta-1) sodium channel (IC(50)=68 uM) and the insect sodium channel para/tipE (IC(50)=4.3 uM), without altering the activation or inactivation kinetics (depressant toxin). This Cyriopagopus hainanus (Chinese bird spider) protein is Mu-theraphotoxin-Hhn2b 1.